Consider the following 162-residue polypeptide: 2-C-methyl-D-erythritol 2,4-cyclodiphosphate synthase (162 aa).

Residues D12 and H14 each coordinate a divalent metal cation. 4-CDP-2-C-methyl-D-erythritol 2-phosphate is bound by residues 12 to 14 (DVH) and 38 to 39 (HS). Residue H46 coordinates a divalent metal cation. 4-CDP-2-C-methyl-D-erythritol 2-phosphate contacts are provided by residues 60 to 62 (DIG), 136 to 139 (TTTE), F143, and R146.

It belongs to the IspF family. In terms of assembly, homotrimer. It depends on a divalent metal cation as a cofactor.

It carries out the reaction 4-CDP-2-C-methyl-D-erythritol 2-phosphate = 2-C-methyl-D-erythritol 2,4-cyclic diphosphate + CMP. It participates in isoprenoid biosynthesis; isopentenyl diphosphate biosynthesis via DXP pathway; isopentenyl diphosphate from 1-deoxy-D-xylulose 5-phosphate: step 4/6. Its function is as follows. Involved in the biosynthesis of isopentenyl diphosphate (IPP) and dimethylallyl diphosphate (DMAPP), two major building blocks of isoprenoid compounds. Catalyzes the conversion of 4-diphosphocytidyl-2-C-methyl-D-erythritol 2-phosphate (CDP-ME2P) to 2-C-methyl-D-erythritol 2,4-cyclodiphosphate (ME-CPP) with a corresponding release of cytidine 5-monophosphate (CMP). This Porphyromonas gingivalis (strain ATCC 33277 / DSM 20709 / CIP 103683 / JCM 12257 / NCTC 11834 / 2561) protein is 2-C-methyl-D-erythritol 2,4-cyclodiphosphate synthase.